The following is a 23-amino-acid chain: Testis ecdysiotropin peptide B (23 aa).

Its function is as follows. Stimulates synthesis of ecdysteroid in the testes of larvae and pupae. This Lymantria dispar (Gypsy moth) protein is Testis ecdysiotropin peptide B.